The following is an 842-amino-acid chain: Glycogen phosphorylase, muscle form (842 aa).

Ser-2 is modified (N-acetylserine). Ser-15 is modified (phosphoserine; by PHK; in form phosphorylase A). AMP is bound by residues Asp-43 and Tyr-76. Tyr-204 and Tyr-227 each carry phosphotyrosine. Position 310–319 (310–319 (RRFKSSKFGC)) interacts with AMP. Ser-430 carries the post-translational modification Phosphoserine. The residue at position 473 (Tyr-473) is a Phosphotyrosine. Residue Lys-681 is modified to N6-(pyridoxal phosphate)lysine. Ser-747 and Ser-748 each carry phosphoserine.

It belongs to the glycogen phosphorylase family. As to quaternary structure, homodimer. Homotetramer; to form the enzymatically active phosphorylase A. Pyridoxal 5'-phosphate is required as a cofactor. In terms of processing, phosphorylation of Ser-15 converts phosphorylase B (unphosphorylated) to phosphorylase A.

It carries out the reaction [(1-&gt;4)-alpha-D-glucosyl](n) + phosphate = [(1-&gt;4)-alpha-D-glucosyl](n-1) + alpha-D-glucose 1-phosphate. Allosterically regulated through the non-covalent binding of metabolites, being activated by AMP and inhibited by ATP, ADP, and glucose-6-phosphate. The activity is also controlled by post-translational modifications including phosphorylation. Functionally, allosteric enzyme that catalyzes the rate-limiting step in glycogen catabolism, the phosphorolytic cleavage of glycogen to produce glucose-1-phosphate, and plays a central role in maintaining cellular and organismal glucose homeostasis. This Ovis aries (Sheep) protein is Glycogen phosphorylase, muscle form.